A 542-amino-acid chain; its full sequence is CTP synthase (542 aa).

The tract at residues M1–L266 is amidoligase domain. Residue S14 coordinates CTP. Position 14 (S14) interacts with UTP. Residues S15–I20 and D72 contribute to the ATP site. Positions 72 and 140 each coordinate Mg(2+). CTP is bound by residues D147–E149, K187–Q192, and K223. UTP is bound by residues K187–Q192 and K223. K239 to V241 is a binding site for ATP. The region spanning T291–K542 is the Glutamine amidotransferase type-1 domain. G352 is a binding site for L-glutamine. C379 acts as the Nucleophile; for glutamine hydrolysis in catalysis. L-glutamine is bound by residues L380 to Q383, E403, and R470. Catalysis depends on residues H515 and E517.

It belongs to the CTP synthase family. As to quaternary structure, homotetramer.

The enzyme catalyses UTP + L-glutamine + ATP + H2O = CTP + L-glutamate + ADP + phosphate + 2 H(+). The catalysed reaction is L-glutamine + H2O = L-glutamate + NH4(+). It catalyses the reaction UTP + NH4(+) + ATP = CTP + ADP + phosphate + 2 H(+). It functions in the pathway pyrimidine metabolism; CTP biosynthesis via de novo pathway; CTP from UDP: step 2/2. Its activity is regulated as follows. Allosterically activated by GTP, when glutamine is the substrate; GTP has no effect on the reaction when ammonia is the substrate. The allosteric effector GTP functions by stabilizing the protein conformation that binds the tetrahedral intermediate(s) formed during glutamine hydrolysis. Inhibited by the product CTP, via allosteric rather than competitive inhibition. In terms of biological role, catalyzes the ATP-dependent amination of UTP to CTP with either L-glutamine or ammonia as the source of nitrogen. Regulates intracellular CTP levels through interactions with the four ribonucleotide triphosphates. The chain is CTP synthase from Actinobacillus succinogenes (strain ATCC 55618 / DSM 22257 / CCUG 43843 / 130Z).